A 116-amino-acid chain; its full sequence is Proline-rich protein 9 (116 aa).

In Mus musculus (Mouse), this protein is Proline-rich protein 9 (Prr9).